Here is a 174-residue protein sequence, read N- to C-terminus: Large ribosomal subunit protein uL13 (174 aa).

Disordered stretches follow at residues Met1–Pro22 and Gly153–Lys174.

This sequence belongs to the universal ribosomal protein uL13 family. Part of the 50S ribosomal subunit. Contacts proteins L3 and L20.

Its function is as follows. This protein is one of the early assembly proteins of the 50S ribosomal subunit. Binds to the 23S rRNA. In Deinococcus radiodurans (strain ATCC 13939 / DSM 20539 / JCM 16871 / CCUG 27074 / LMG 4051 / NBRC 15346 / NCIMB 9279 / VKM B-1422 / R1), this protein is Large ribosomal subunit protein uL13 (rplM).